Here is a 232-residue protein sequence, read N- to C-terminus: LexA repressor (232 aa).

Positions 36–56 (IREIGDAAGLQSTSSVAYQLK) form a DNA-binding region, H-T-H motif. Residues 62-86 (GFLRRDPNKPRAVDVRHLPETDNRT) show a composition bias toward basic and acidic residues. Residues 62 to 107 (GFLRRDPNKPRAVDVRHLPETDNRTKAGPKAKARPTAGASPQPELA) are disordered. Residues S156 and K193 each act as for autocatalytic cleavage activity in the active site.

It belongs to the peptidase S24 family. As to quaternary structure, homodimer.

The enzyme catalyses Hydrolysis of Ala-|-Gly bond in repressor LexA.. Its function is as follows. Represses a number of genes involved in the response to DNA damage (SOS response), including recA and lexA. In the presence of single-stranded DNA, RecA interacts with LexA causing an autocatalytic cleavage which disrupts the DNA-binding part of LexA, leading to derepression of the SOS regulon and eventually DNA repair. The protein is LexA repressor of Corynebacterium efficiens (strain DSM 44549 / YS-314 / AJ 12310 / JCM 11189 / NBRC 100395).